The following is a 250-amino-acid chain: Cyclopentanol dehydrogenase (250 aa).

The NAD(+) site is built by Met-18, Asp-37, Asp-63, Val-64, Asn-90, Tyr-155, Lys-159, Ile-188, Thr-190, and Thr-193. The active-site Proton acceptor is Tyr-155.

Belongs to the short-chain dehydrogenases/reductases (SDR) family.

The enzyme catalyses cyclopentanol + NAD(+) = cyclopentanone + NADH + H(+). The catalysed reaction is cyclohexanol + NAD(+) = cyclohexanone + NADH + H(+). Its pathway is alcohol metabolism; cyclopentanol degradation; 5-valerolactone from cyclopentanol: step 1/2. Functionally, catalyzes the oxidation of cyclopentanol to cyclopentanone and cyclohexanol to cyclohexanone. The activity toward cyclohexanol is 60% that of cyclopentanol. This chain is Cyclopentanol dehydrogenase, found in Comamonas sp. (strain NCIMB 9872).